The primary structure comprises 352 residues: MGKFSKIKKVQEEESAHQKMEWEAAGAKDSSSDDSSDESDNDDQPKQATEETRKRAELWTNRERVLVLCSRGADVRTRYLMKDIKDLLPHAKGDSKLDQQKSLNVLNEIAEMKNCTKVMYFESRKRKDTYLWMSNVEKGPSIKFLVHNVHTMKELKMSGNCLRASRPVLSFDDAFDKKPQLKLIKAVLMQTLGTPHHHPRSQPFVDHVFNFSVGEGDKIWFRNFQIVDESLQLQEVGPRFVLEMVRLFAGSFEGAVLYDNPNYVSPNVIRREHRKGQHSYIEKQLAVKASNIKQAKVTEILAEKTVDLVGKEFDTQNNAAADSEAAAQITAQIEKRRVRKKKSQASKYTGSD.

The disordered stretch occupies residues 1–55 (MGKFSKIKKVQEEESAHQKMEWEAAGAKDSSSDDSSDESDNDDQPKQATEETRKR). Residues 9–22 (KVQEEESAHQKMEW) show a composition bias toward basic and acidic residues. Acidic residues predominate over residues 32–42 (SDDSSDESDND). Basic and acidic residues predominate over residues 43 to 55 (DQPKQATEETRKR). A Brix domain is found at 63–253 (ERVLVLCSRG…MVRLFAGSFE (191 aa)).

Belongs to the BRX1 family.

Its subcellular location is the nucleus. The protein resides in the nucleolus. In terms of biological role, required for biogenesis of the 60S ribosomal subunit. The sequence is that of Ribosome biogenesis protein BRX1 homolog from Caenorhabditis elegans.